A 370-amino-acid polypeptide reads, in one-letter code: DNA replication and repair protein RecF (370 aa).

30–37 (GENAQGKT) is an ATP binding site.

Belongs to the RecF family.

The protein resides in the cytoplasm. Functionally, the RecF protein is involved in DNA metabolism; it is required for DNA replication and normal SOS inducibility. RecF binds preferentially to single-stranded, linear DNA. It also seems to bind ATP. This chain is DNA replication and repair protein RecF, found in Staphylococcus aureus (strain bovine RF122 / ET3-1).